Reading from the N-terminus, the 164-residue chain is Peptidyl-prolyl cis-trans isomerase (164 aa).

Residues 7-163 (FFDLQANGEN…KKITIADCGQ (157 aa)) form the PPIase cyclophilin-type domain.

This sequence belongs to the cyclophilin-type PPIase family. PPIase A subfamily.

It localises to the cytoplasm. The enzyme catalyses [protein]-peptidylproline (omega=180) = [protein]-peptidylproline (omega=0). Its activity is regulated as follows. Binds cyclosporin A (CsA). CsA mediates some of its effects via an inhibitory action on PPIase. In terms of biological role, PPIases accelerate the folding of proteins. It catalyzes the cis-trans isomerization of proline imidic peptide bonds in oligopeptides. The sequence is that of Peptidyl-prolyl cis-trans isomerase from Hemicentrotus pulcherrimus (Sea urchin).